A 240-amino-acid polypeptide reads, in one-letter code: Probable transcriptional regulatory protein MADE_1004275 (240 aa).

The protein belongs to the TACO1 family.

The protein resides in the cytoplasm. The chain is Probable transcriptional regulatory protein MADE_1004275 from Alteromonas mediterranea (strain DSM 17117 / CIP 110805 / LMG 28347 / Deep ecotype).